Here is a 95-residue protein sequence, read N- to C-terminus: MALERSDVEKIAHLARLGLDDAEIPRTTQTLNDILGLIDRMQAVDTHGIEPLAHPLEATQRLRPDEVTETDHRDAYQAIAPAVENGLYLVPKVIE.

It belongs to the GatC family. In terms of assembly, heterotrimer of A, B and C subunits.

The enzyme catalyses L-glutamyl-tRNA(Gln) + L-glutamine + ATP + H2O = L-glutaminyl-tRNA(Gln) + L-glutamate + ADP + phosphate + H(+). It carries out the reaction L-aspartyl-tRNA(Asn) + L-glutamine + ATP + H2O = L-asparaginyl-tRNA(Asn) + L-glutamate + ADP + phosphate + 2 H(+). Functionally, allows the formation of correctly charged Asn-tRNA(Asn) or Gln-tRNA(Gln) through the transamidation of misacylated Asp-tRNA(Asn) or Glu-tRNA(Gln) in organisms which lack either or both of asparaginyl-tRNA or glutaminyl-tRNA synthetases. The reaction takes place in the presence of glutamine and ATP through an activated phospho-Asp-tRNA(Asn) or phospho-Glu-tRNA(Gln). The chain is Aspartyl/glutamyl-tRNA(Asn/Gln) amidotransferase subunit C from Azotobacter vinelandii (strain DJ / ATCC BAA-1303).